Here is a 507-residue protein sequence, read N- to C-terminus: L-threonine dehydratase biosynthetic IlvA (507 aa).

At K52 the chain carries N6-(pyridoxal phosphate)lysine. Residues N79, 182-186 (GGGGL), and S309 each bind pyridoxal 5'-phosphate. ACT-like domains are found at residues 333–404 (AVFA…DLTH) and 427–498 (RLFR…EESA).

It belongs to the serine/threonine dehydratase family. Homotetramer. It depends on pyridoxal 5'-phosphate as a cofactor.

It catalyses the reaction L-threonine = 2-oxobutanoate + NH4(+). Its pathway is amino-acid biosynthesis; L-isoleucine biosynthesis; 2-oxobutanoate from L-threonine: step 1/1. Catalyzes the anaerobic formation of alpha-ketobutyrate and ammonia from threonine in a two-step reaction. The first step involved a dehydration of threonine and a production of enamine intermediates (aminocrotonate), which tautomerizes to its imine form (iminobutyrate). Both intermediates are unstable and short-lived. The second step is the nonenzymatic hydrolysis of the enamine/imine intermediates to form 2-ketobutyrate and free ammonia. In the low water environment of the cell, the second step is accelerated by RidA. The sequence is that of L-threonine dehydratase biosynthetic IlvA (ilvA) from Burkholderia multivorans (strain ATCC 17616 / 249).